Here is a 301-residue protein sequence, read N- to C-terminus: MDAIREAIRIERLSKTFSNGRKALDEIDLRIEPGEMVALIGASGSGKSTLLRHIAGFTASDAQPSQIEILGRPIQQNGRIVREVRSIRRDIGFVFQQFNLVNRLSVETNVLIGALARLPWWRRLSGRFPRAERALSIAALNEVGIGEHARERAANLSGGQQQRAALARALVQRARIVLADEPIASLDPESSRRVMDMLRTLNIEHRLTVLVSLHQVEIAMQYCPRTIALRRGKVVYDGPSAALTPALLKTLYGDEARELIDEAAQGPDDTESKNTADNTPLQDAAPASGRYAFALNPAHSN.

The 249-residue stretch at 8-256 (IRIERLSKTF…LLKTLYGDEA (249 aa)) folds into the ABC transporter domain. 41–48 (GASGSGKS) is an ATP binding site. The segment at 264-287 (AQGPDDTESKNTADNTPLQDAAPA) is disordered.

Belongs to the ABC transporter superfamily. Phosphonates importer (TC 3.A.1.9.1) family. As to quaternary structure, the complex is composed of two ATP-binding proteins (PhnC), two transmembrane proteins (PhnE) and a solute-binding protein (PhnD).

The protein localises to the cell inner membrane. It carries out the reaction phosphonate(out) + ATP + H2O = phosphonate(in) + ADP + phosphate + H(+). In terms of biological role, part of the ABC transporter complex PhnCDE involved in phosphonates import. Responsible for energy coupling to the transport system. In Paraburkholderia xenovorans (strain LB400), this protein is Phosphonates import ATP-binding protein PhnC.